A 364-amino-acid polypeptide reads, in one-letter code: Chorismate synthase (364 aa).

The NADP(+) site is built by arginine 47 and arginine 53. Residues 124–126, glycine 286, 301–305, and arginine 327 each bind FMN; these read RSS and KPTAT.

It belongs to the chorismate synthase family. As to quaternary structure, homotetramer. FMNH2 serves as cofactor.

It carries out the reaction 5-O-(1-carboxyvinyl)-3-phosphoshikimate = chorismate + phosphate. Its pathway is metabolic intermediate biosynthesis; chorismate biosynthesis; chorismate from D-erythrose 4-phosphate and phosphoenolpyruvate: step 7/7. Its function is as follows. Catalyzes the anti-1,4-elimination of the C-3 phosphate and the C-6 proR hydrogen from 5-enolpyruvylshikimate-3-phosphate (EPSP) to yield chorismate, which is the branch point compound that serves as the starting substrate for the three terminal pathways of aromatic amino acid biosynthesis. This reaction introduces a second double bond into the aromatic ring system. This Acaryochloris marina (strain MBIC 11017) protein is Chorismate synthase.